We begin with the raw amino-acid sequence, 123 residues long: Urotensin-2 (123 aa).

The signal sequence occupies residues 1-20 (MDRVPFCCLLFVGLLNPLLS). A propeptide spanning residues 21–104 (FPVTDTGEMS…TVLSRLLART (84 aa)) is cleaved from the precursor. A disordered region spans residues 63 to 91 (EAEGSLGQADPSAETPTPRGSLRKALTGQ). Cysteines 117 and 122 form a disulfide.

The protein belongs to the urotensin-2 family. Brain specific.

Its subcellular location is the secreted. Its function is as follows. Highly potent vasoconstrictor. This Rattus norvegicus (Rat) protein is Urotensin-2 (Uts2).